A 122-amino-acid chain; its full sequence is Large ribosomal subunit protein uL14 (122 aa).

Belongs to the universal ribosomal protein uL14 family. As to quaternary structure, part of the 50S ribosomal subunit. Forms a cluster with proteins L3 and L19. In the 70S ribosome, L14 and L19 interact and together make contacts with the 16S rRNA in bridges B5 and B8.

Functionally, binds to 23S rRNA. Forms part of two intersubunit bridges in the 70S ribosome. The sequence is that of Large ribosomal subunit protein uL14 from Streptococcus suis (strain 05ZYH33).